The chain runs to 377 residues: Guanine nucleotide-binding protein subunit beta (377 aa).

WD repeat units lie at residues 63-93, 105-135, 154-185, 202-233, 246-276, 293-323, and 339-369; these read GHTGKVYSLDWTPEKNRIVSASQDGRLIVWN, LPCAWVMTCAFSPSGQSVACGGLDSACSIFN, GHKGYVSSCQYVPDEDTHLITSSGDQTCVLWD, GHTADVLSVSISSSNPKLFVSGSCDTTARLWD, GHESDVNTVKFFPDGNRFGTGSDDGSCRLFD, GDIPHVTSMAFSISGRLLFVGYSNGDCYVWD, and SHEGRISCLGLSADGSALCTGSWDTNLKIWA.

It belongs to the WD repeat G protein beta family. G proteins are composed of 3 units, alpha, beta and gamma.

Its function is as follows. Guanine nucleotide-binding proteins (G proteins) are involved as a modulator or transducer in various transmembrane signaling systems. The beta and gamma chains are required for the GTPase activity, for replacement of GDP by GTP, and for G protein-effector interaction. This is Guanine nucleotide-binding protein subunit beta (GB1) from Solanum tuberosum (Potato).